Reading from the N-terminus, the 931-residue chain is Beta-mannosidase A (931 aa).

An N-terminal signal peptide occupies residues 1–21 (MRHSIGLAAALLAPTLPVALG). 7 N-linked (GlcNAc...) asparagine glycosylation sites follow: N40, N79, N247, N282, N316, N326, and N347. E479 serves as the catalytic Proton donor. Residues N550, N608, N658, N738, N790, N798, N830, and N918 are each glycosylated (N-linked (GlcNAc...) asparagine).

The protein belongs to the glycosyl hydrolase 2 family. Beta-mannosidase A subfamily. Homodimer.

Its subcellular location is the secreted. It carries out the reaction Hydrolysis of terminal, non-reducing beta-D-mannose residues in beta-D-mannosides.. The protein operates within glycan metabolism; N-glycan degradation. In terms of biological role, exoglycosidase that cleaves the single beta-linked mannose residue from the non-reducing end of beta-mannosidic oligosaccharides of various complexity and length. Involved in the degradation of polymeric mannan and galactomannan. This Aspergillus niger (strain ATCC MYA-4892 / CBS 513.88 / FGSC A1513) protein is Beta-mannosidase A (mndA).